The chain runs to 235 residues: Phosphoribosylaminoimidazole-succinocarboxamide synthase (235 aa).

The protein belongs to the SAICAR synthetase family.

The enzyme catalyses 5-amino-1-(5-phospho-D-ribosyl)imidazole-4-carboxylate + L-aspartate + ATP = (2S)-2-[5-amino-1-(5-phospho-beta-D-ribosyl)imidazole-4-carboxamido]succinate + ADP + phosphate + 2 H(+). It functions in the pathway purine metabolism; IMP biosynthesis via de novo pathway; 5-amino-1-(5-phospho-D-ribosyl)imidazole-4-carboxamide from 5-amino-1-(5-phospho-D-ribosyl)imidazole-4-carboxylate: step 1/2. The chain is Phosphoribosylaminoimidazole-succinocarboxamide synthase from Clostridium perfringens (strain SM101 / Type A).